Reading from the N-terminus, the 241-residue chain is MRKIVIAGNWKMFKTQAESQEFLKEFLPALEETPQEREVLLCVPFTDLAILSQSLHGSLVQLGAQNVHWAENGAYTGEISGPMLTEIGVRYVIVGHSERRQFFGETDETVNLRLQAAQKYGLTPILCVGETKQQRDSGETESLIVSQLDKDLINVDQTNLVIAYEPIWAIGTGDTCETTEANRVIGLIRSQLKNPDVPIQYGGSVKPNNIDEIMAQPEIDGVLVGGASLEAASFARIVNYQ.

Residue 9-11 (NWK) coordinates substrate. Histidine 96 functions as the Electrophile in the catalytic mechanism. Glutamate 165 functions as the Proton acceptor in the catalytic mechanism. Substrate contacts are provided by residues glycine 171, serine 204, and 225 to 226 (GG).

It belongs to the triosephosphate isomerase family. In terms of assembly, homodimer.

The protein resides in the cytoplasm. It carries out the reaction D-glyceraldehyde 3-phosphate = dihydroxyacetone phosphate. The protein operates within carbohydrate biosynthesis; gluconeogenesis. It participates in carbohydrate degradation; glycolysis; D-glyceraldehyde 3-phosphate from glycerone phosphate: step 1/1. Involved in the gluconeogenesis. Catalyzes stereospecifically the conversion of dihydroxyacetone phosphate (DHAP) to D-glyceraldehyde-3-phosphate (G3P). The protein is Triosephosphate isomerase of Trichormus variabilis (strain ATCC 29413 / PCC 7937) (Anabaena variabilis).